Consider the following 503-residue polypeptide: Aspartyl/glutamyl-tRNA(Asn/Gln) amidotransferase subunit B (503 aa).

It belongs to the GatB/GatE family. GatB subfamily. Heterotrimer of A, B and C subunits.

It catalyses the reaction L-glutamyl-tRNA(Gln) + L-glutamine + ATP + H2O = L-glutaminyl-tRNA(Gln) + L-glutamate + ADP + phosphate + H(+). It carries out the reaction L-aspartyl-tRNA(Asn) + L-glutamine + ATP + H2O = L-asparaginyl-tRNA(Asn) + L-glutamate + ADP + phosphate + 2 H(+). Allows the formation of correctly charged Asn-tRNA(Asn) or Gln-tRNA(Gln) through the transamidation of misacylated Asp-tRNA(Asn) or Glu-tRNA(Gln) in organisms which lack either or both of asparaginyl-tRNA or glutaminyl-tRNA synthetases. The reaction takes place in the presence of glutamine and ATP through an activated phospho-Asp-tRNA(Asn) or phospho-Glu-tRNA(Gln). The protein is Aspartyl/glutamyl-tRNA(Asn/Gln) amidotransferase subunit B of Jannaschia sp. (strain CCS1).